Reading from the N-terminus, the 357-residue chain is Protein BIG GRAIN 1-like A (357 aa).

Disordered regions lie at residues 1 to 146 (MEIT…KELG) and 208 to 233 (SSTC…GKSK). Over residues 75-87 (DFERSRRKTDFLR) the composition is skewed to basic and acidic residues. Composition is skewed to low complexity over residues 88 to 104 (HSNS…SSES) and 112 to 127 (KSSA…QPKP). Residues 129–139 (RTSSVDHSSAV) are compositionally biased toward polar residues. The span at 208–223 (SSTCSSASSFSRSCLS) shows a compositional bias: low complexity.

Belongs to the BIG GRAIN 1 (BG1) plant protein family.

It is found in the cell membrane. In terms of biological role, involved in auxin transport. Regulator of the auxin signaling pathway. This is Protein BIG GRAIN 1-like A from Arabidopsis thaliana (Mouse-ear cress).